The primary structure comprises 469 residues: Putative arginine/ornithine antiporter (469 aa).

Transmembrane regions (helical) follow at residues glycine 8 to leucine 28, alanine 44 to isoleucine 64, alanine 90 to isoleucine 110, leucine 144 to isoleucine 164, valine 179 to glycine 199, isoleucine 213 to isoleucine 233, isoleucine 254 to valine 274, valine 301 to leucine 321, serine 347 to isoleucine 367, phenylalanine 375 to isoleucine 395, aspartate 417 to alanine 437, and leucine 439 to valine 459.

Belongs to the amino acid-polyamine-organocation (APC) superfamily. Basic amino acid/polyamine antiporter (APA) (TC 2.A.3.2) family.

The protein localises to the cell membrane. It catalyses the reaction L-ornithine(in) + L-arginine(out) = L-ornithine(out) + L-arginine(in). Functionally, catalyzes electroneutral exchange between L-arginine and L-ornithine. The polypeptide is Putative arginine/ornithine antiporter (yvsH) (Bacillus subtilis (strain 168)).